The sequence spans 176 residues: Translation initiation factor IF-3 (176 aa).

The protein belongs to the IF-3 family. As to quaternary structure, monomer.

The protein localises to the cytoplasm. In terms of biological role, IF-3 binds to the 30S ribosomal subunit and shifts the equilibrium between 70S ribosomes and their 50S and 30S subunits in favor of the free subunits, thus enhancing the availability of 30S subunits on which protein synthesis initiation begins. The protein is Translation initiation factor IF-3 of Rippkaea orientalis (strain PCC 8801 / RF-1) (Cyanothece sp. (strain PCC 8801)).